The chain runs to 300 residues: 33 kDa chaperonin (300 aa).

2 disulfide bridges follow: C247–C249 and C280–C283.

It belongs to the HSP33 family. In terms of processing, under oxidizing conditions two disulfide bonds are formed involving the reactive cysteines. Under reducing conditions zinc is bound to the reactive cysteines and the protein is inactive.

The protein resides in the cytoplasm. In terms of biological role, redox regulated molecular chaperone. Protects both thermally unfolding and oxidatively damaged proteins from irreversible aggregation. Plays an important role in the bacterial defense system toward oxidative stress. This Prochlorococcus marinus (strain MIT 9515) protein is 33 kDa chaperonin.